The primary structure comprises 671 residues: DNA ligase (671 aa).

Residues 32–36, 81–82, and glutamate 113 each bind NAD(+); these read DAEYD and SL. Lysine 115 serves as the catalytic N6-AMP-lysine intermediate. Arginine 136, glutamate 173, lysine 290, and lysine 314 together coordinate NAD(+). 4 residues coordinate Zn(2+): cysteine 408, cysteine 411, cysteine 426, and cysteine 432. The 79-residue stretch at 593–671 folds into the BRCT domain; that stretch reads EIDSPFAGKT…EAEMIRLLGA (79 aa).

Belongs to the NAD-dependent DNA ligase family. LigA subfamily. Mg(2+) serves as cofactor. Requires Mn(2+) as cofactor.

The enzyme catalyses NAD(+) + (deoxyribonucleotide)n-3'-hydroxyl + 5'-phospho-(deoxyribonucleotide)m = (deoxyribonucleotide)n+m + AMP + beta-nicotinamide D-nucleotide.. Functionally, DNA ligase that catalyzes the formation of phosphodiester linkages between 5'-phosphoryl and 3'-hydroxyl groups in double-stranded DNA using NAD as a coenzyme and as the energy source for the reaction. It is essential for DNA replication and repair of damaged DNA. The chain is DNA ligase from Salmonella heidelberg (strain SL476).